The sequence spans 177 residues: Adenine phosphoribosyltransferase (177 aa).

The protein belongs to the purine/pyrimidine phosphoribosyltransferase family. Homodimer.

The protein localises to the cytoplasm. It carries out the reaction AMP + diphosphate = 5-phospho-alpha-D-ribose 1-diphosphate + adenine. Its pathway is purine metabolism; AMP biosynthesis via salvage pathway; AMP from adenine: step 1/1. In terms of biological role, catalyzes a salvage reaction resulting in the formation of AMP, that is energically less costly than de novo synthesis. The polypeptide is Adenine phosphoribosyltransferase (Rhodococcus jostii (strain RHA1)).